The following is a 111-amino-acid chain: UPF0339 protein BP0521 (111 aa).

A run of 2 repeats spans residues Ala-9–Arg-57 and Ala-60–Gln-108. The tract at residues Thr-86–Ala-111 is disordered.

Belongs to the UPF0339 family. Duplicated subfamily.

This is UPF0339 protein BP0521 from Bordetella pertussis (strain Tohama I / ATCC BAA-589 / NCTC 13251).